The chain runs to 488 residues: Cobyric acid synthase (488 aa).

A GATase cobBQ-type domain is found at 250–438; that stretch reads DITIAIIRLP…LHGIFDNGSW (189 aa). Cys-331 acts as the Nucleophile in catalysis. Residue His-430 is part of the active site.

It belongs to the CobB/CobQ family. CobQ subfamily.

The protein operates within cofactor biosynthesis; adenosylcobalamin biosynthesis. Its function is as follows. Catalyzes amidations at positions B, D, E, and G on adenosylcobyrinic A,C-diamide. NH(2) groups are provided by glutamine, and one molecule of ATP is hydrogenolyzed for each amidation. The polypeptide is Cobyric acid synthase (Trichodesmium erythraeum (strain IMS101)).